A 317-amino-acid polypeptide reads, in one-letter code: Glutathione synthetase (317 aa).

An ATP-grasp domain is found at 124–310 (EKLFTAWFPE…ITGKLMDAIE (187 aa)). 150-207 (FRQEHGDIILKPLDGMGGASIFRVKENDPNVSVIIETLTNHGQNYAMAQTFVPDISNG) serves as a coordination point for ATP. E281 and N283 together coordinate Mg(2+).

The protein belongs to the prokaryotic GSH synthase family. The cofactor is Mg(2+). It depends on Mn(2+) as a cofactor.

The enzyme catalyses gamma-L-glutamyl-L-cysteine + glycine + ATP = glutathione + ADP + phosphate + H(+). The protein operates within sulfur metabolism; glutathione biosynthesis; glutathione from L-cysteine and L-glutamate: step 2/2. The sequence is that of Glutathione synthetase from Vibrio vulnificus (strain CMCP6).